Here is a 165-residue protein sequence, read N- to C-terminus: SsrA-binding protein (165 aa).

Residues 135–158 (QAHDKRQDMARRDAQREVTRELGR) are compositionally biased toward basic and acidic residues. The interval 135–165 (QAHDKRQDMARRDAQREVTRELGRRVKGMTS) is disordered.

It belongs to the SmpB family.

Its subcellular location is the cytoplasm. In terms of biological role, required for rescue of stalled ribosomes mediated by trans-translation. Binds to transfer-messenger RNA (tmRNA), required for stable association of tmRNA with ribosomes. tmRNA and SmpB together mimic tRNA shape, replacing the anticodon stem-loop with SmpB. tmRNA is encoded by the ssrA gene; the 2 termini fold to resemble tRNA(Ala) and it encodes a 'tag peptide', a short internal open reading frame. During trans-translation Ala-aminoacylated tmRNA acts like a tRNA, entering the A-site of stalled ribosomes, displacing the stalled mRNA. The ribosome then switches to translate the ORF on the tmRNA; the nascent peptide is terminated with the 'tag peptide' encoded by the tmRNA and targeted for degradation. The ribosome is freed to recommence translation, which seems to be the essential function of trans-translation. The sequence is that of SsrA-binding protein from Mycolicibacterium vanbaalenii (strain DSM 7251 / JCM 13017 / BCRC 16820 / KCTC 9966 / NRRL B-24157 / PYR-1) (Mycobacterium vanbaalenii).